The chain runs to 692 residues: DNA-binding protein RFX2 (692 aa).

The interval 1–26 (MQNSEGGADSPATVALRPAAQPVPAS) is disordered. A Phosphoserine modification is found at Ser26. Positions 169 to 244 (TLQWLLDNYE…YHYYGIRLKP (76 aa)) form a DNA-binding region, RFX-type winged-helix. The segment at 261-296 (RQQPTHQKPRYRPAQKSDSLGDGSAHSNMHSTPEQA) is disordered. Polar residues predominate over residues 285–294 (AHSNMHSTPE). A Phosphoserine modification is found at Ser386. The span at 660-685 (DGHSSEADVDGRSLGEPLVKRERSDP) shows a compositional bias: basic and acidic residues. A disordered region spans residues 660-692 (DGHSSEADVDGRSLGEPLVKRERSDPSHPLQGI).

The protein belongs to the RFX family. In terms of assembly, homodimer; probably only forms homodimers in testis. Heterodimer; heterodimerizes with RFX1 and RFX3. Expressed at highest level in testis. Expressed at lower level in thymus. Also expressed in stomach, kidney, liver, brain and heart. Weakly expressed in spleen and lung. Within testis, most abundantly present in spermatocytes: present from pachytene spermatocytes to early spermatids (at protein level). Also present in non-germinal tissues.

It is found in the nucleus. The protein localises to the cytoplasm. Transcription factor that acts as a key regulator of spermatogenesis. Acts by regulating expression of genes required for the haploid phase during spermiogenesis, such as genes required for cilium assembly and function. Recognizes and binds the X-box, a regulatory motif with DNA sequence 5'-GTNRCC(0-3N)RGYAAC-3' present on promoters. Probably activates transcription of the testis-specific histone gene H1-6. The chain is DNA-binding protein RFX2 (Rfx2) from Rattus norvegicus (Rat).